Reading from the N-terminus, the 649-residue chain is DNA mismatch repair protein MutL (649 aa).

This sequence belongs to the DNA mismatch repair MutL/HexB family.

This protein is involved in the repair of mismatches in DNA. It is required for dam-dependent methyl-directed DNA mismatch repair. May act as a 'molecular matchmaker', a protein that promotes the formation of a stable complex between two or more DNA-binding proteins in an ATP-dependent manner without itself being part of a final effector complex. This chain is DNA mismatch repair protein MutL, found in Streptococcus pneumoniae (strain P1031).